A 427-amino-acid chain; its full sequence is O-methyltransferase PaMT (427 aa).

Residues Trp-230 and Asp-281 each coordinate S-adenosyl-L-methionine. The Proton acceptor role is filled by His-326.

It belongs to the class I-like SAM-binding methyltransferase superfamily. Cation-independent O-methyltransferase family. COMT subfamily. It depends on S-adenosyl-L-methionine as a cofactor.

It participates in mycotoxin biosynthesis. In terms of biological role, O-methyltransferase; part of the 2 gene clusters that mediate the biosynthesis of fusicoccins, diterpene glucosides that display phytohormone-like activity and function as potent activators of plasma membrane H(+)-ATPases in plants by modifying 14-3-3 proteins and cause the plant disease constriction canker. The first step in the pathway is performed by the fusicoccadiene synthase PaFS that possesses both prenyl transferase and terpene cyclase activity, converting isopentenyl diphosphate and dimethylallyl diphosphate into geranylgeranyl diphosphate (GGDP) and successively converting GGDP into fusicocca-2,10(14)-diene, a precursor for fusicoccin H. The second step is the oxidation at the C-8 position by the cytochrome P450 monooxygenase PaP450-2 to yield fusicocca-2,10(14)-diene-8-beta-ol. The cytochrome P450 monooxygenase PaP450-1 then catalyzes the hydroxylation at the C-16 position to produce fusicocca-2,10(14)-diene-8-beta,16-diol. The dioxygenase fc-dox then catalyzes the 16-oxydation of fusicocca-2,10(14)-diene-8-beta,16-diol to yield an aldehyde (8-beta-hydroxyfusicocca-1,10(14)-dien-16-al). The short-chain dehydrogenase/reductase fc-sdr catalyzes the reduction of the aldehyde to yield fusicocca-1,10(14)-diene-8-beta,16-diol. The next step is the hydroxylation at C-9 performed by the cytochrome P450 monooxygenase PaP450-3 that leads to fusicoccin H aglycon which is glycosylated to fusicoccin H by the O-glycosyltransferase PaGT. Hydroxylation at C-12 by the cytochrome P450 monooxygenase PaP450-4 leads then to the production of fusicoccin Q and is followed by methylation by the O-methyltransferase PaMT to yield fusicoccin P. Fusicoccin P is further converted to fusicoccin J via prenylation by the O-glucose prenyltransferase PaPT. Cytochrome P450 monooxygenase PaP450-5 then performs hydroxylation at C-19 to yield dideacetyl-fusicoccin A which is acetylated to 3'-O-deacetyl-fusicoccin A by the O-acetyltransferase PaAT-2. Finally, a another acetylation by the O-acetyltransferase PaAT-1 yields fusicoccin A. This is O-methyltransferase PaMT from Phomopsis amygdali (Fusicoccum amygdali).